The chain runs to 135 residues: DNA-directed RNA polymerase subunit omega (135 aa).

Residues 84 to 106 are disordered; that stretch reads IAGHSSHVSPSRSSRHTGLGKSF.

The protein belongs to the RNA polymerase subunit omega family. The RNAP catalytic core consists of 2 alpha, 1 beta, 1 beta' and 1 omega subunit. When a sigma factor is associated with the core the holoenzyme is formed, which can initiate transcription.

The catalysed reaction is RNA(n) + a ribonucleoside 5'-triphosphate = RNA(n+1) + diphosphate. Promotes RNA polymerase assembly. Latches the N- and C-terminal regions of the beta' subunit thereby facilitating its interaction with the beta and alpha subunits. In Anaplasma phagocytophilum (strain HZ), this protein is DNA-directed RNA polymerase subunit omega.